We begin with the raw amino-acid sequence, 186 residues long: TATA-box-binding protein B (186 aa).

Tandem repeats lie at residues 10-86 (IENV…FGDI) and 101-179 (VQNI…QDRL).

It belongs to the TBP family.

In terms of biological role, general factor that plays a role in the activation of archaeal genes transcribed by RNA polymerase. Binds specifically to the TATA box promoter element which lies close to the position of transcription initiation. This chain is TATA-box-binding protein B (tbpB1), found in Halobacterium salinarum (strain ATCC 700922 / JCM 11081 / NRC-1) (Halobacterium halobium).